The primary structure comprises 131 residues: UPF0344 protein Sca_0577 (131 aa).

The next 4 helical transmembrane spans lie at 1–21 (MLHL…VSYI), 42–62 (LFLV…FATA), 69–89 (LLTL…VTLV), and 99–119 (GLFW…IILP).

The protein belongs to the UPF0344 family.

It localises to the cell membrane. The chain is UPF0344 protein Sca_0577 from Staphylococcus carnosus (strain TM300).